The chain runs to 302 residues: Phosphatidylglycerol--prolipoprotein diacylglyceryl transferase (302 aa).

3 helical membrane-spanning segments follow: residues 26 to 46 (WYAL…VMLV), 67 to 87 (LVLW…VLFY), and 108 to 128 (IWEG…AIVL). Position 156 (Arg-156) interacts with a 1,2-diacyl-sn-glycero-3-phospho-(1'-sn-glycerol). 2 helical membrane-spanning segments follow: residues 231 to 251 (GALV…LEGV) and 263 to 283 (LGLT…VWLL).

Belongs to the Lgt family.

It is found in the cell inner membrane. It catalyses the reaction L-cysteinyl-[prolipoprotein] + a 1,2-diacyl-sn-glycero-3-phospho-(1'-sn-glycerol) = an S-1,2-diacyl-sn-glyceryl-L-cysteinyl-[prolipoprotein] + sn-glycerol 1-phosphate + H(+). It functions in the pathway protein modification; lipoprotein biosynthesis (diacylglyceryl transfer). Catalyzes the transfer of the diacylglyceryl group from phosphatidylglycerol to the sulfhydryl group of the N-terminal cysteine of a prolipoprotein, the first step in the formation of mature lipoproteins. This Caulobacter sp. (strain K31) protein is Phosphatidylglycerol--prolipoprotein diacylglyceryl transferase.